A 91-amino-acid chain; its full sequence is MGRSLKKGPFIADSLLRKLEKQNDNDDKSVIKTWSRASTILPMMIGHTIAVHNGKSHIPVFITEQMVGHKLGEFAPTRTFKGHIKDKKGGR.

This sequence belongs to the universal ribosomal protein uS19 family.

In terms of biological role, protein S19 forms a complex with S13 that binds strongly to the 16S ribosomal RNA. In Synechococcus sp. (strain CC9902), this protein is Small ribosomal subunit protein uS19.